The sequence spans 258 residues: Microtubule-associated protein RP/EB family member 1 (258 aa).

The Calponin-homology (CH) domain maps to 14-116 (NLSRHDMLAW…FVQWFKKFFD (103 aa)). In terms of domain architecture, EB1 C-terminal spans 175–245 (KKAAGDDESA…LYATDEGFVI (71 aa)).

It belongs to the MAPRE family.

The protein localises to the cytoplasm. The protein resides in the cytoskeleton. It is found in the microtubule organizing center. It localises to the centrosome. Its subcellular location is the golgi apparatus. The protein localises to the spindle. The protein resides in the spindle pole. Its function is as follows. Plus-end tracking protein (+TIP) that binds to the plus-end of microtubules and regulates the dynamics of the microtubule cytoskeleton. Promotes cytoplasmic microtubule nucleation and elongation. Involved in mitotic spindle positioning by stabilizing microtubules and promoting dynamic connection between astral microtubules and the cortex during mitotic chromosome segregation. The sequence is that of Microtubule-associated protein RP/EB family member 1 (MAPRE1) from Gallus gallus (Chicken).